A 189-amino-acid chain; its full sequence is DKQLDADVSPKPTIFLPSIAETKLQKAGTYLCLLEKFFPDIIKIHWQEKKSNTILGSQEGNTMKTNDTYMKFSWLTVPEESLDKEHRCIVRHENNKNGIDQEIIFPPIKTDVTTVDPKYNYSKDANDVITMDPKDNWSKDANDTLLLQLTNTSAYYTYLLLLLKSVVYFAIITCCLLRRTAFCCNGEKS.

In terms of domain architecture, Ig-like spans 10-104 (PKPTIFLPSI…NKNGIDQEII (95 aa)). Residues cysteine 32 and cysteine 88 are joined by a disulfide bond. N-linked (GlcNAc...) asparagine glycosylation is found at asparagine 66, asparagine 120, asparagine 136, asparagine 142, and asparagine 151. The chain crosses the membrane as a helical span at residues 155 to 177 (YYTYLLLLLKSVVYFAIITCCLL).

As to quaternary structure, gamma-delta TR is a heterodimer composed of a gamma and delta chain; disulfide-linked. The gamma-delta TR is associated with the transmembrane signaling CD3 coreceptor proteins following the stoichiometry: a single gamma-delta TR heterodimer associates with one CD3D-CD3E heterodimer, one CD3G-CD3E heterodimer and one CD247 homodimer forming a stable octameric structure. Upon activation, gamma-delta TR complex associates with FCER1G to initiate intracellular signaling.

It localises to the cell membrane. In terms of biological role, constant region of T cell receptor (TR) gamma chain that participates in the antigen recognition. Gamma-delta TRs recognize a variety of self and foreign non-peptide antigens frequently expressed at the epithelial boundaries between the host and external environment, including endogenous lipids presented by MH-like protein CD1D and phosphoantigens presented by butyrophilin-like molecule BTN3A1. Upon antigen recognition induces rapid, innate-like immune responses involved in pathogen clearance and tissue repair. Binding of gamma-delta TR complex to antigen triggers phosphorylation of immunoreceptor tyrosine-based activation motifs (ITAMs) in the CD3 chains by the LCK and FYN kinases, allowing the recruitment, phosphorylation, and activation of ZAP70 that facilitates phosphorylation of the scaffolding proteins LCP2 and LAT. This lead to the formation of a supramolecular signalosome that recruits the phospholipase PLCG1, resulting in calcium mobilization and ERK activation, ultimately leading to T cell expansion and differentiation into effector cells. Gamma-delta TRs are produced through somatic rearrangement of a limited repertoire of variable (V), diversity (D), and joining (J) genes. The potential diversity of gamma-delta TRs is conferred by the unique ability to rearrange (D) genes in tandem and to utilize all three reading frames. The combinatorial diversity is considerably increased by the sequence exonuclease trimming and random nucleotide (N) region additions which occur during the V-(D)-J rearrangements. The chain is T cell receptor gamma constant 2 from Homo sapiens (Human).